Consider the following 440-residue polypeptide: Thymidine phosphorylase (440 aa).

This sequence belongs to the thymidine/pyrimidine-nucleoside phosphorylase family. As to quaternary structure, homodimer.

It carries out the reaction thymidine + phosphate = 2-deoxy-alpha-D-ribose 1-phosphate + thymine. It functions in the pathway pyrimidine metabolism; dTMP biosynthesis via salvage pathway; dTMP from thymine: step 1/2. The enzymes which catalyze the reversible phosphorolysis of pyrimidine nucleosides are involved in the degradation of these compounds and in their utilization as carbon and energy sources, or in the rescue of pyrimidine bases for nucleotide synthesis. This is Thymidine phosphorylase from Yersinia pseudotuberculosis serotype O:1b (strain IP 31758).